A 359-amino-acid chain; its full sequence is DNA replication and repair protein RecF (359 aa).

30-37 (GPNGSGKT) contributes to the ATP binding site.

Belongs to the RecF family.

It is found in the cytoplasm. In terms of biological role, the RecF protein is involved in DNA metabolism; it is required for DNA replication and normal SOS inducibility. RecF binds preferentially to single-stranded, linear DNA. It also seems to bind ATP. This is DNA replication and repair protein RecF from Vibrio vulnificus (strain YJ016).